The primary structure comprises 134 residues: Small ribosomal subunit protein uS11 (134 aa).

This sequence belongs to the universal ribosomal protein uS11 family. In terms of assembly, part of the 30S ribosomal subunit. Interacts with proteins S7 and S18. Binds to IF-3.

Located on the platform of the 30S subunit, it bridges several disparate RNA helices of the 16S rRNA. Forms part of the Shine-Dalgarno cleft in the 70S ribosome. In Corynebacterium glutamicum (strain R), this protein is Small ribosomal subunit protein uS11.